The primary structure comprises 331 residues: Proline-rich protein 33 (331 aa).

Disordered stretches follow at residues M1–R112, S128–A185, and A204–S247. The segment covering P94–G105 has biased composition (pro residues). Residues P149–S169 are compositionally biased toward low complexity. The span at P170–A185 shows a compositional bias: pro residues. Over residues E217–A238 the composition is skewed to low complexity.

This chain is Proline-rich protein 33 (PRR33), found in Homo sapiens (Human).